A 311-amino-acid polypeptide reads, in one-letter code: Dihydroorotate dehydrogenase A (fumarate) (311 aa).

Residues S19 and 43–44 (KS) each bind FMN. Substrate is bound by residues K43, 67–71 (NSMGL), and N127. Residue N127 coordinates FMN. Residue C130 is the Nucleophile of the active site. The FMN site is built by K164 and V192. A substrate-binding site is contributed by 193-194 (NS). FMN contacts are provided by residues G221, 249 to 250 (GG), and 271 to 272 (GT).

Belongs to the dihydroorotate dehydrogenase family. Type 1 subfamily. As to quaternary structure, homodimer. It depends on FMN as a cofactor.

It is found in the cytoplasm. The enzyme catalyses (S)-dihydroorotate + fumarate = orotate + succinate. Its pathway is pyrimidine metabolism; UMP biosynthesis via de novo pathway. Functionally, catalyzes the conversion of dihydroorotate to orotate with fumarate as the electron acceptor. In Lactococcus lactis subsp. cremoris (Streptococcus cremoris), this protein is Dihydroorotate dehydrogenase A (fumarate) (pyrDA).